A 940-amino-acid chain; its full sequence is Protein translocase subunit SecA (940 aa).

Residues Gln86, 104 to 108 (GEGKT), and Asp494 contribute to the ATP site. The segment at 884-940 (ATAKAQKDQQAEDAVLVGEDEPETPQGPPARGAFGQPTGASSAPQNREERRKADRRK) is disordered. Residues 929–940 (NREERRKADRRK) are compositionally biased toward basic and acidic residues.

Belongs to the SecA family. As to quaternary structure, monomer and homodimer. Part of the essential Sec protein translocation apparatus which comprises SecA, SecYEG and auxiliary proteins SecDF. Other proteins may also be involved.

It is found in the cell membrane. It localises to the cytoplasm. The catalysed reaction is ATP + H2O + cellular proteinSide 1 = ADP + phosphate + cellular proteinSide 2.. In terms of biological role, part of the Sec protein translocase complex. Interacts with the SecYEG preprotein conducting channel. Has a central role in coupling the hydrolysis of ATP to the transfer of proteins into and across the cell membrane, serving as an ATP-driven molecular motor driving the stepwise translocation of polypeptide chains across the membrane. This is Protein translocase subunit SecA from Clavibacter sepedonicus (Clavibacter michiganensis subsp. sepedonicus).